The following is an 86-amino-acid chain: Omega-theraphotoxin-Hhn1f 2 (86 aa).

An N-terminal signal peptide occupies residues 1-21 (MKSIVFVALFGLALLAVVCSA). Positions 22 to 50 (SEDAHKELLKEVVRAVVVDKTDAVQAEER) are excised as a propeptide. 3 disulfides stabilise this stretch: C52-C66, C59-C71, and C65-C78.

This sequence belongs to the neurotoxin 10 (Hwtx-1) family. 17 (Hntx-9) subfamily. Expressed by the venom gland.

Its subcellular location is the secreted. In terms of biological role, ion channel inhibitor. The sequence is that of Omega-theraphotoxin-Hhn1f 2 from Cyriopagopus hainanus (Chinese bird spider).